We begin with the raw amino-acid sequence, 613 residues long: Azole resistance protein 1 (613 aa).

The tract at residues 1 to 38 is disordered; sequence MKGEPKTYSMSDLSYYGEKAQQQNEKQQKQYVVRRNST. Residues 1-70 are Extracellular-facing; the sequence is MKGEPKTYSM…PKGFILYASL (70 aa). Residues 71 to 91 traverse the membrane as a helical segment; it reads IALALSLFLAALDIMIVSTII. At 92–102 the chain is on the cytoplasmic side; the sequence is EEVAKQFGSYS. The helical transmembrane segment at 103–123 threads the bilayer; that stretch reads EIGWLFTGYSLPNALLALIWG. Over 124–134 the chain is Extracellular; it reads RIATPIGFKET. The chain crosses the membrane as a helical span at residues 135 to 155; that stretch reads MLFAIVIFEIGSLISALANSM. Residues 156–163 are Cytoplasmic-facing; sequence SMLIGGRV. A helical transmembrane segment spans residues 164–184; the sequence is IAGVGGCGIQSLSFVIGSTLV. Residues 185–189 are Extracellular-facing; sequence EESQR. The chain crosses the membrane as a helical span at residues 190-210; sequence GILIAVLSCSFAIASVVGPFL. The Cytoplasmic portion of the chain corresponds to 211–221; sequence GGVFTSSVTWR. The chain crosses the membrane as a helical span at residues 222 to 242; the sequence is WCFYVNLPIGGLAFFLFLFFY. Over 243–298 the chain is Extracellular; it reads NPGLSTFQETMDNIRKFPSQFIEIVRNVAYHLLKIKGFSKLNGWRKPFMELIFMYD. Residues 299 to 319 traverse the membrane as a helical segment; the sequence is IIEFVFCSAGFTCILLAFTFG. Residues 320 to 329 are Cytoplasmic-facing; that stretch reads GNRYAWNSAS. The chain crosses the membrane as a helical span at residues 330–350; that stretch reads IIILFIIGIVLVVLAGIYDFL. Residues 351-375 lie on the Extracellular side of the membrane; it reads VFPKFNIVKATPHYQPLMSWTNIKK. Residues 376–396 form a helical membrane-spanning segment; sequence PGIFTVNIALFLTCAGYISQF. The Cytoplasmic portion of the chain corresponds to 397-414; that stretch reads TYIVQYFQLIYNDSAWRA. Residues 415–435 form a helical membrane-spanning segment; sequence AVHLVACIISTVVTAILCGAI. Topologically, residues 436 to 443 are extracellular; sequence TDKTRQIK. A helical transmembrane segment spans residues 444-464; it reads PIIVISSIFGVVGAGILTLLN. The Cytoplasmic portion of the chain corresponds to 465–472; sequence NNANNSAH. A helical membrane pass occupies residues 473–493; it reads IGLLILPGVAFGGLAQSSMLA. Over 494–581 the chain is Extracellular; the sequence is SQIQLDKKSP…SKLGNIISES (88 aa). Residues 582 to 602 form a helical membrane-spanning segment; the sequence is LTDVFYMALGFYALSLIFAVF. The Cytoplasmic portion of the chain corresponds to 603–613; the sequence is ASNKKVTASLR.

It belongs to the major facilitator superfamily.

The protein resides in the cell membrane. Functionally, transporter protein required for adaptation to high stress imposed by low-chain organic acids, in particular by acetic acid, and for resistance to azoles, especially to ketoconazole and fluconazole. In Saccharomyces cerevisiae (strain ATCC 204508 / S288c) (Baker's yeast), this protein is Azole resistance protein 1 (AZR1).